The chain runs to 229 residues: DNA repair protein RecO (229 aa).

Belongs to the RecO family.

Its function is as follows. Involved in DNA repair and RecF pathway recombination. The chain is DNA repair protein RecO from Legionella pneumophila (strain Lens).